Here is a 2024-residue protein sequence, read N- to C-terminus: Pericentriolar material 1 protein (2024 aa).

A disordered region spans residues methionine 1–methionine 92. An N-acetylalanine modification is found at alanine 2. A mediates interaction with DZIP1 region spans residues alanine 2 to threonine 1460. Positions arginine 43–threonine 61 are enriched in basic and acidic residues. Phosphoserine is present on residues serine 65, serine 68, serine 69, serine 93, serine 110, serine 116, and serine 119. Positions aspartate 111–arginine 163 are disordered. 2 stretches are compositionally biased toward polar residues: residues serine 116–arginine 132 and glutamine 147–arginine 163. Asparagine 159 bears the Phosphoserine; in variant Ser-159 mark. The stretch at lysine 218–alanine 301 forms a coiled coil. Positions arginine 354–glutamate 392 are disordered. Residues glutamate 369–proline 383 show a composition bias toward polar residues. A Phosphoserine modification is found at serine 370. Serine 372 carries the phosphoserine; by PLK4 modification. Serine 384 is modified (phosphoserine). Lysine 399 bears the N6-acetyllysine mark. Residues methionine 400–histidine 424 adopt a coiled-coil conformation. 2 disordered regions span residues arginine 421–lysine 492 and glutamate 523–isoleucine 548. 2 stretches are compositionally biased toward polar residues: residues leucine 425–serine 445 and glycine 456–glutamate 477. Positions serine 487 to glutamate 543 form a coiled coil. A Phosphoserine modification is found at serine 588. Disordered regions lie at residues histidine 614 to aspartate 652 and phenylalanine 699 to valine 726. The span at glycine 618–glycine 632 shows a compositional bias: acidic residues. Over residues serine 634 to serine 643 the composition is skewed to low complexity. Serine 643 is subject to Phosphoserine. The stretch at glutamate 651 to aspartate 682 forms a coiled coil. A compositionally biased stretch (polar residues) spans glutamine 708–lysine 719. Coiled-coil stretches lie at residues valine 726–alanine 769 and serine 824–glutamate 858. Threonine 859 carries the post-translational modification Phosphothreonine. A phosphoserine mark is found at serine 861, serine 866, serine 869, and serine 872. Threonine 877 is subject to Phosphothreonine. The tract at residues threonine 915–lysine 947 is disordered. A compositionally biased stretch (polar residues) spans alanine 925–glycine 946. Residues serine 960, serine 977, serine 988, and serine 991 each carry the phosphoserine modification. Residues threonine 1063–histidine 1089 adopt a coiled-coil conformation. Disordered stretches follow at residues glutamine 1085–serine 1109 and phenylalanine 1152–tryptophan 1211. The span at histidine 1089–glycine 1099 shows a compositional bias: basic and acidic residues. The span at phenylalanine 1152 to lysine 1173 shows a compositional bias: polar residues. Phosphoserine is present on residues serine 1185 and serine 1188. The segment covering glutamate 1192–glutamate 1201 has biased composition (basic and acidic residues). Residues serine 1229 and serine 1231 each carry the phosphoserine modification. Residues valine 1232–threonine 1246 show a composition bias toward polar residues. The tract at residues valine 1232–valine 1342 is disordered. Phosphoserine occurs at positions 1257, 1260, 1262, and 1263. The tract at residues threonine 1279–glycine 1799 is interaction with HAP1. The span at lysine 1296–asparagine 1313 shows a compositional bias: basic residues. Phosphoserine is present on residues serine 1318 and serine 1320. Phosphothreonine is present on threonine 1468. Residues isoleucine 1515–asparagine 1539 are a coiled coil. Phosphoserine occurs at positions 1573, 1697, 1730, 1765, 1768, 1776, and 1782. 2 disordered regions span residues leucine 1725–proline 1868 and glutamate 1880–valine 1944. The segment covering serine 1768–glutamate 1777 has biased composition (acidic residues). Over residues isoleucine 1783 to glycine 1797 the composition is skewed to polar residues. Residues glycine 1799 to proline 1815 show a composition bias toward acidic residues. Positions valine 1818–glutamate 1827 are enriched in polar residues. Over residues aspartate 1835 to serine 1860 the composition is skewed to basic and acidic residues. Positions proline 1905–proline 1916 are enriched in low complexity. Residues proline 1913–isoleucine 2024 form an interaction with BBS4 region. Residues alanine 1924 to alanine 1933 show a composition bias toward polar residues. A phosphoserine mark is found at serine 1958 and serine 1977. The interval glutamate 2005–isoleucine 2024 is disordered.

The protein belongs to the PCM1 family. Self-associates. Interacts with C2CD3. Interacts with BBS4, BBS8, CETN3, HAP1, NDE1, NDEL1, MAP1LC3B, GABARAPAL2, and GABARAP. Interacts with CEP131; the interaction increases in response to ultraviolet light (UV) radiation. Associates with microtubule; association to microtubule is reduced in response to cellular stress, such as ultraviolet light (UV) radiation or heat shock, in a process that requires p38 MAP kinase signaling. Interacts with CFAP263. Interacts with SSX2IP. Interacts with CCDC13. Interacts with CEP290. Interacts with PARD6A. Interacts with KIAA0753/OFIP, CEP20/FOR20 and OFD1; the interaction with CEP20/FOR20 and OFD1 may be mediated by KIAA0753/OFIP. Interacts with CCDC66. Interacts with CCDC61. Interacts with DZIP1; localizes DZIP1 and the associated BBSome to centriolar satellite. Interacts with CSTPP1, TTLL1, TPGS1 and LRRC49. Interacts with CFAP53. Post-translationally, ubiquitinated. Undergoes monoubiquitination catalyzed by the E3 ubiquitin-protein ligase MIB1 in proliferating cells, preventing cilia formation. Monoubiquitination by MIB1 is inhibited in response to cellular stress, such as ultraviolet light (UV) radiation or heat shock, resulting in cilia formation initiation. Variant Ser-159 is phosphorylated. In terms of processing, phosphorylated on multiple serine and threonine residues by DYRK3 during the G2-to-M transition, after the nuclear-envelope breakdown. Phosphorylation by DYRK3 promotes disassembly of pericentriolar material. Phosphorylation at Ser-372 mediated by PLK4 is required to maintain the integrity of centriolar satellites. Expressed in blood, bone marrow, breast, lymph node, ovary and thyroid.

It is found in the cytoplasm. It localises to the cytoskeleton. The protein resides in the microtubule organizing center. Its subcellular location is the centrosome. The protein localises to the cytoplasmic granule. It is found in the centriolar satellite. It localises to the cilium basal body. Its function is as follows. Required for centrosome assembly and function. Essential for the correct localization of several centrosomal proteins including CEP250, CETN3, PCNT and NEK2. Required to anchor microtubules to the centrosome. Also involved in cilium biogenesis by recruiting the BBSome, a ciliary protein complex involved in cilium biogenesis, to the centriolar satellites. Recruits the tubulin polyglutamylase complex (TPGC) to centriolar satellites. In Homo sapiens (Human), this protein is Pericentriolar material 1 protein.